The primary structure comprises 141 residues: MRNDHVTLRSTAVFDLLAPQTPAVPVQVELRYDTRDPYAVVAAFRTGRAGWVEWVFARDLLADGLIAHAGVGDVTIRPAVDDPEVVVIELSSPSGHAVFEASAQELADFLDRTYDVVVPGNENLWVNVDDALTRLLPHDLS.

This sequence belongs to the SsgA family. Interacts with SsgA. Interacts with FtsZ (via N-terminus).

The protein localises to the cell septum. Functionally, involved in sporulation-specific cell division. Required for early stages of sporulation. Important in the process of growth cessation prior to sporulation-specific cell division. Recruits cell division protein FtsZ to the future septum sites and tethers the contractile ring structure (Z ring) to the cytoplasmic membrane during sporulation. Stimulates polymerization and filament length of FtsZ in vitro. The chain is Sporulation-specific cell division protein SsgB from Saccharopolyspora erythraea (strain ATCC 11635 / DSM 40517 / JCM 4748 / NBRC 13426 / NCIMB 8594 / NRRL 2338).